We begin with the raw amino-acid sequence, 137 residues long: Cellular retinoic acid-binding protein 1 (137 aa).

The Nuclear localization signal signature appears at 21–31 (KALGVNAMLRK). 132 to 134 (RIY) contributes to the all-trans-retinoate binding site.

It belongs to the calycin superfamily. Fatty-acid binding protein (FABP) family.

The protein resides in the cytoplasm. Functionally, cytosolic CRABPs may regulate the access of retinoic acid to the nuclear retinoic acid receptors. This Mus musculus (Mouse) protein is Cellular retinoic acid-binding protein 1 (Crabp1).